A 337-amino-acid chain; its full sequence is Inositol 2-dehydrogenase (337 aa).

The protein belongs to the Gfo/Idh/MocA family. Homotetramer.

The catalysed reaction is myo-inositol + NAD(+) = scyllo-inosose + NADH + H(+). Functionally, involved in the oxidation of myo-inositol (MI) to 2-keto-myo-inositol (2KMI or 2-inosose). This chain is Inositol 2-dehydrogenase, found in Pseudarthrobacter chlorophenolicus (strain ATCC 700700 / DSM 12829 / CIP 107037 / JCM 12360 / KCTC 9906 / NCIMB 13794 / A6) (Arthrobacter chlorophenolicus).